Reading from the N-terminus, the 345-residue chain is Heat-inducible transcription repressor HrcA (345 aa).

The protein belongs to the HrcA family.

Its function is as follows. Negative regulator of class I heat shock genes (grpE-dnaK-dnaJ and groELS operons). Prevents heat-shock induction of these operons. This Dehalococcoides mccartyi (strain ATCC BAA-2266 / KCTC 15142 / 195) (Dehalococcoides ethenogenes (strain 195)) protein is Heat-inducible transcription repressor HrcA.